The sequence spans 330 residues: Ketol-acid reductoisomerase (NADP(+)) (330 aa).

The KARI N-terminal Rossmann domain maps to 2-182; sequence ARMYYDADAN…GGTRAGILET (181 aa). Residues 25 to 28, S51, S53, and 83 to 86 contribute to the NADP(+) site; these read YGSQ and DEFQ. H108 is a catalytic residue. G134 provides a ligand contact to NADP(+). The 146-residue stretch at 183-328 folds into the KARI C-terminal knotted domain; the sequence is SFREETETDL…KDLRAMFSWL (146 aa). Residues D191, E195, E227, and E231 each coordinate Mg(2+). S252 lines the substrate pocket.

This sequence belongs to the ketol-acid reductoisomerase family. The cofactor is Mg(2+).

It carries out the reaction (2R)-2,3-dihydroxy-3-methylbutanoate + NADP(+) = (2S)-2-acetolactate + NADPH + H(+). It catalyses the reaction (2R,3R)-2,3-dihydroxy-3-methylpentanoate + NADP(+) = (S)-2-ethyl-2-hydroxy-3-oxobutanoate + NADPH + H(+). It functions in the pathway amino-acid biosynthesis; L-isoleucine biosynthesis; L-isoleucine from 2-oxobutanoate: step 2/4. Its pathway is amino-acid biosynthesis; L-valine biosynthesis; L-valine from pyruvate: step 2/4. Functionally, involved in the biosynthesis of branched-chain amino acids (BCAA). Catalyzes an alkyl-migration followed by a ketol-acid reduction of (S)-2-acetolactate (S2AL) to yield (R)-2,3-dihydroxy-isovalerate. In the isomerase reaction, S2AL is rearranged via a Mg-dependent methyl migration to produce 3-hydroxy-3-methyl-2-ketobutyrate (HMKB). In the reductase reaction, this 2-ketoacid undergoes a metal-dependent reduction by NADPH to yield (R)-2,3-dihydroxy-isovalerate. The sequence is that of Ketol-acid reductoisomerase (NADP(+)) from Synechococcus elongatus (strain ATCC 33912 / PCC 7942 / FACHB-805) (Anacystis nidulans R2).